The sequence spans 1619 residues: Rap-GAP domain-containing protein DDB_G0281809 (1619 aa).

4 disordered regions span residues 128-249, 289-316, 907-974, and 1134-1153; these read SMSN…TTPI, QQQQ…MPGS, SIGG…PYIN, and ISNN…TSNN. 2 stretches are compositionally biased toward low complexity: residues 130–204 and 231–249; these read SNNN…SLSL and QISA…TTPI. Residues 265–295 are a coiled coil; that stretch reads FNEVVQQQQQQQQQQQQQQQQQQQQQQQQQS. 2 stretches are compositionally biased toward low complexity: residues 916-926 and 934-965; these read SGNSSQPSSTG and SGSK…NGGS. A Rap-GAP domain is found at 1273 to 1494; that stretch reads LNMLDSVSER…TNRKKLISDI (222 aa). The interval 1554-1619 is disordered; sequence IGTFTLPPPP…LSQSEDQSHK (66 aa). Positions 1559–1573 are enriched in pro residues; that stretch reads LPPPPISPTISPQPS. The span at 1574–1590 shows a compositional bias: low complexity; the sequence is PHLSSSGGSWASSKGGS. The span at 1591–1619 shows a compositional bias: polar residues; that stretch reads TQPTTPSGRTSNFLSRRPNLSQSEDQSHK.

In Dictyostelium discoideum (Social amoeba), this protein is Rap-GAP domain-containing protein DDB_G0281809.